We begin with the raw amino-acid sequence, 243 residues long: Alanyl-tRNA editing protein AlaX-M (243 aa).

4 residues coordinate Zn(2+): histidine 105, histidine 109, cysteine 208, and histidine 212.

Belongs to the class-II aminoacyl-tRNA synthetase family. Editing domain AlaX-M subfamily. The cofactor is Zn(2+).

It localises to the cytoplasm. Its function is as follows. Functions in trans to edit the amino acid moiety from incorrectly charged Ser-tRNA(Ala) or Gly-tRNA(Ala). Has no activity on incorrectly charged Ser-tRNA(Thr), nor on correctly charged Ala-tRNA(Ala) or Ser-tRNA(Ser). The polypeptide is Alanyl-tRNA editing protein AlaX-M (alaXM) (Methanosarcina barkeri (strain Fusaro / DSM 804)).